The sequence spans 184 residues: Ribosome-recycling factor (184 aa).

Belongs to the RRF family.

The protein resides in the cytoplasm. Responsible for the release of ribosomes from messenger RNA at the termination of protein biosynthesis. May increase the efficiency of translation by recycling ribosomes from one round of translation to another. The chain is Ribosome-recycling factor from Clostridium botulinum (strain Okra / Type B1).